The chain runs to 314 residues: Beta-lactamase (314 aa).

The segment at residues 1–39 is a signal peptide (tat-type signal); it reads MHPSTSRPSRRTLLTATAGAALAAATLVPGTAHASSGGR. Residues 31–50 form a disordered region; that stretch reads TAHASSGGRGHGSGSVSDAE. Ser-89 acts as the Acyl-ester intermediate in catalysis. Residue 259 to 261 participates in substrate binding; the sequence is KTG.

It belongs to the class-A beta-lactamase family. Predicted to be exported by the Tat system. The position of the signal peptide cleavage has been experimentally proven.

It catalyses the reaction a beta-lactam + H2O = a substituted beta-amino acid. This chain is Beta-lactamase, found in Streptomyces albus G.